The sequence spans 181 residues: HGPRTase-like protein 2 (181 aa).

The protein belongs to the purine/pyrimidine phosphoribosyltransferase family. Archaeal HPRT subfamily.

May catalyze a purine salvage reaction, the substrate is unknown. In Natrialba magadii (strain ATCC 43099 / DSM 3394 / CCM 3739 / CIP 104546 / IAM 13178 / JCM 8861 / NBRC 102185 / NCIMB 2190 / MS3) (Natronobacterium magadii), this protein is HGPRTase-like protein 2.